The chain runs to 424 residues: Tyrosine--tRNA ligase (424 aa).

Tyr37 is a binding site for L-tyrosine. Residues 42 to 51 (PTADSLHLGH) carry the 'HIGH' region motif. N6-acetyllysine is present on Lys144. Positions 175 and 179 each coordinate L-tyrosine. The 'KMSKS' region motif lies at 235–239 (KFGKT). Lys238 contacts ATP. The 58-residue stretch at 357–414 (ADLMQALVDSELQPSRGQARKTIASNAITINGEKQSDPEYFFKEEDRLFGRFTLLRRG) folds into the S4 RNA-binding domain.

It belongs to the class-I aminoacyl-tRNA synthetase family. TyrS type 1 subfamily. As to quaternary structure, homodimer.

Its subcellular location is the cytoplasm. It catalyses the reaction tRNA(Tyr) + L-tyrosine + ATP = L-tyrosyl-tRNA(Tyr) + AMP + diphosphate + H(+). Catalyzes the attachment of tyrosine to tRNA(Tyr) in a two-step reaction: tyrosine is first activated by ATP to form Tyr-AMP and then transferred to the acceptor end of tRNA(Tyr). The sequence is that of Tyrosine--tRNA ligase from Shigella dysenteriae serotype 1 (strain Sd197).